Here is a 408-residue protein sequence, read N- to C-terminus: Photox toxin (408 aa).

The disordered stretch occupies residues 168–196 (NNQQHIKDSDGRKPVNNMPPPPPPPMADK). Pro residues predominate over residues 184–193 (NMPPPPPPPM). Residues 190-393 (PPPMADKTQK…LRLTDDASAD (204 aa)) enclose the TR mART core domain. Residues R288, S318, and E355 contribute to the active site.

This sequence in the C-terminal section; belongs to the SpvB family.

It catalyses the reaction L-arginyl-[protein] + NAD(+) = N(omega)-(ADP-D-ribosyl)-L-arginyl-[protein] + nicotinamide + H(+). Mono-ADP-ribosylates chicken skeletal alpha-actin and human non-skeletal beta- and gamma-actin. Mono-ADP-ribosylates 'Arg-177' of yeast actin, blocking its ability to polymerize. Does not possess NAD(+)-glycohydrolase activity, unlike most mART enzymes. Upon expression in S.cerevisiae almost completely inhibits growth. In Photorhabdus laumondii subsp. laumondii (strain DSM 15139 / CIP 105565 / TT01) (Photorhabdus luminescens subsp. laumondii), this protein is Photox toxin (phxA).